The following is a 343-amino-acid chain: MSASHADQPTQTVSYPQLIDLLRRIFVVHGTSPEVADVLAENCASAQRDGSHSHGIFRIPGYLSSLASGWVDGKAVPVVEDVGAAFVRVDACNGFAQPALAAARSLLIDKARSAGVAILAIRGSHHFAALWPDVEPFAEQGLVALSMVNSMTCVVPHGARQPLFGTNPIAFGAPRAGGEPIVFDLATSAIAHGDVQIAAREGRLLPAGMGVDRDGLPTQEPRAILDGGALLPFGGHKGSALSMMVELLAAGLTGGNFSFEFDWSKHPGAQTPWTGQLLIVIDPDKGAGQHFAQRSEELVRQLHGVGQERLPGDRRYLERARSMAHGIVIAQADLERLQELAGH.

Residue S53 is the Charge relay system of the active site. Residue H54 is the Proton donor of the active site. R58 contacts substrate. NADP(+) is bound at residue H126 to L130. T166 contacts substrate. Residue D184–A186 coordinates NADP(+). Position 192 to 193 (H192 to G193) interacts with substrate. The active-site Charge relay system is the D194. Residues H236–K237 and R309–R315 contribute to the NADP(+) site.

This sequence belongs to the LDH2/MDH2 oxidoreductase family. In terms of assembly, homodimer.

It carries out the reaction L-pipecolate + NADP(+) = Delta(1)-piperideine-2-carboxylate + NADPH + H(+). The catalysed reaction is L-proline + NADP(+) = 1-pyrroline-2-carboxylate + NADPH + H(+). The enzyme catalyses N-methyl-L-alanine + NADP(+) + H2O = methylamine + pyruvate + NADPH + H(+). Its activity is regulated as follows. Is inhibited by the substrate analog pyrrole-2-carboxylate, and by 2-picolinate. In terms of biological role, catalyzes the reduction of both Delta(1)-pyrroline-2-carboxylate (Pyr2C) and Delta(1)-piperideine-2-carboxylate (Pip2C) to L-proline and L-pipecolate, respectively, using NADPH as the electron donor. Can catalyze the reverse oxidation reactions, albeit at a much lower rate. Is also able to catalyze in vitro the NADPH-dependent formation of N-methylalanine from pyruvate and N-methylamine; can act on other alpha-keto acids and specifically uses methylamine and not ammonia for these reductive amination reactions. Can use NADH instead of NADPH, although with much less efficiency. The protein is Delta(1)-pyrroline-2-carboxylate/Delta(1)-piperideine-2-carboxylate reductase of Pseudomonas syringae pv. tomato.